An 81-amino-acid polypeptide reads, in one-letter code: GAMMA-ctenitoxin-Pn1a (81 aa).

A signal peptide spans 1–16; sequence MKVAIVFLSLLVLAFA. Residues 17-34 constitute a propeptide that is removed on maturation; the sequence is SESIEENREEFPVEESAR. Intrachain disulfides connect Cys-35/Cys-49, Cys-42/Cys-55, Cys-46/Cys-81, Cys-48/Cys-65, and Cys-57/Cys-63.

It belongs to the neurotoxin 03 (Tx2) family. 05 subfamily. Expressed by the venom gland.

The protein resides in the secreted. Functionally, this insecticidal neurotoxin targets two types of channels/receptors. It reversibly inhibits the N-methyl-D-aspartate (NMDA)-subtype of ionotropic glutamate receptor (GRIN). It inhibits glutamate uptake from rat brain synaptosomes, and blocks GRIN in hippocampal slices. It also acts on sodium channels of both insects and mammals. On sodium channel insects, it strongly slows down channel inactivation (EC(50)=212.5 nM) and causes an increase (105%) in peak amplitude (at 1 uM) of B.germanica sodium channel (Nav), whereas it inhibits all mammalien sodium channels tested with the following order of potency: Nav1.3/SCN3A (IC(50)=1.5 uM) &gt; Nav1.6/SCN8A &gt; Nav1.5/SCN5A &gt; Nav1.4/SCN4A &gt;= Nav1.2/SCN2A. In vivo, it is highly toxic to house fly (Musca domestica), cockroach (Periplaneta americana), and cricket (Acheta domesticus). In different rat pain models (induced by PGE2, carrageenan or glutamate), it shows antinociceptive effect that may be related to an inhibitory activity on the glutamatergic system. The sequence is that of GAMMA-ctenitoxin-Pn1a from Phoneutria nigriventer (Brazilian armed spider).